Here is a 686-residue protein sequence, read N- to C-terminus: ATP-dependent DNA helicase RecG (686 aa).

The interval 50–149 (TVIDLNQAED…GTQTQENADV (100 aa)) is wedge domain. The Helicase ATP-binding domain occupies 279-439 (DLKAPIRMHR…VFGEMDVSSI (161 aa)). 292–299 (GDVGSGKT) is an ATP binding site. The DEAH box signature appears at 392–395 (DEQH). The 157-residue stretch at 462-618 (VLMQMTSELK…GFELSERDLE (157 aa)) folds into the Helicase C-terminal domain.

Belongs to the helicase family. RecG subfamily. In terms of assembly, monomer.

It carries out the reaction Couples ATP hydrolysis with the unwinding of duplex DNA by translocating in the 3'-5' direction.. The enzyme catalyses ATP + H2O = ADP + phosphate + H(+). Functionally, plays a critical role in recombination and DNA repair. Helps process Holliday junction intermediates to mature products by catalyzing branch migration. Has replication fork regression activity, unwinds stalled or blocked replication forks to make a HJ that can be resolved. Has a DNA unwinding activity characteristic of a DNA helicase with 3'-5' polarity. This chain is ATP-dependent DNA helicase RecG, found in Staphylococcus aureus (strain NCTC 8325 / PS 47).